We begin with the raw amino-acid sequence, 304 residues long: Protoheme IX farnesyltransferase (304 aa).

Transmembrane regions (helical) follow at residues 32–52 (VVAL…PGSV), 54–74 (LQPL…AAAF), 104–124 (ALTF…TLVN), 126–146 (LTAW…TAYL), 154–174 (IVVG…SVTG), 180–200 (ALLL…ALAI), 226–246 (CILL…LVGM), 247–267 (CGPV…YKAW), and 284–304 (FSIY…YLWV).

Belongs to the UbiA prenyltransferase family. Protoheme IX farnesyltransferase subfamily.

It is found in the cell inner membrane. The enzyme catalyses heme b + (2E,6E)-farnesyl diphosphate + H2O = Fe(II)-heme o + diphosphate. Its pathway is porphyrin-containing compound metabolism; heme O biosynthesis; heme O from protoheme: step 1/1. Functionally, converts heme B (protoheme IX) to heme O by substitution of the vinyl group on carbon 2 of heme B porphyrin ring with a hydroxyethyl farnesyl side group. The protein is Protoheme IX farnesyltransferase of Shewanella sediminis (strain HAW-EB3).